Consider the following 402-residue polypeptide: Xylose/arabinose-binding protein XylF (402 aa).

Residues 38 to 58 (GIIAGVLAAFGAGFGSGYVTA) form a helical membrane-spanning segment.

It belongs to the bacterial solute-binding protein 2 family. In terms of assembly, the complex is composed of two ATP-binding proteins (XylG), two transmembrane proteins (XylH) and a solute-binding protein (XylF).

The protein resides in the cell membrane. In terms of biological role, part of the ABC transporter complex XylFGH involved in the uptake of xylose and arabinose. This chain is Xylose/arabinose-binding protein XylF, found in Sulfolobus acidocaldarius (strain ATCC 33909 / DSM 639 / JCM 8929 / NBRC 15157 / NCIMB 11770).